The chain runs to 1755 residues: E3 ubiquitin-protein ligase UBR2 (1755 aa).

N-acetylalanine is present on A2. K94 is covalently cross-linked (Glycyl lysine isopeptide (Lys-Gly) (interchain with G-Cter in ubiquitin)). The segment at 97 to 168 (HLCGRVFKVG…EGPYCQKHEL (72 aa)) adopts a UBR-type zinc-finger fold. Positions 99, 112, 115, 124, 127, 133, and 136 each coordinate Zn(2+). Residue F148 coordinates a peptide. C149 provides a ligand contact to Zn(2+). Residue D150 participates in a peptide binding. C151 provides a ligand contact to Zn(2+). D153 provides a ligand contact to a peptide. K158 participates in a covalent cross-link: Glycyl lysine isopeptide (Lys-Gly) (interchain with G-Cter in ubiquitin). Residue C163 participates in Zn(2+) binding. K165 is covalently cross-linked (Glycyl lysine isopeptide (Lys-Gly) (interchain with G-Cter in ubiquitin)). H166 is a Zn(2+) binding site. Glycyl lysine isopeptide (Lys-Gly) (interchain with G-Cter in ubiquitin) cross-links involve residues K248, K255, and K470. A Phosphoserine modification is found at S476. Residues K488, K568, K779, and K789 each participate in a glycyl lysine isopeptide (Lys-Gly) (interchain with G-Cter in ubiquitin) cross-link. The segment at 1004–1034 (ESSPTSPVAETEGTIMEESSRDKDKAERKRK) is disordered. Residues 1019 to 1054 (MEESSRDKDKAERKRKAEIARLRREKIMAQMSEMQR) are a coiled coil. Positions 1021-1034 (ESSRDKDKAERKRK) are enriched in basic and acidic residues. Zn(2+)-binding residues include C1108, C1111, C1168, H1170, H1173, C1176, C1210, and C1213. The RING-type; atypical zinc-finger motif lies at 1108 to 1214 (CILCQEEQEV…NGEFLCPLCE (107 aa)). A disordered region spans residues 1261 to 1287 (RKEESTPNNASTKNSENVDELQLPEGF). Residues 1266 to 1275 (TPNNASTKNS) are compositionally biased toward polar residues. Glycyl lysine isopeptide (Lys-Gly) (interchain with G-Cter in ubiquitin) cross-links involve residues K1496, K1599, and K1689. S1694 is subject to Phosphoserine. Y1697 carries the phosphotyrosine modification.

This sequence belongs to the E3 ubiquitin-protein ligase UBR1-like family. In terms of assembly, interacts with UBE2B; promotes the UBE2B-H2A interaction and the ubiquitination of histone H2A by UBE2B and UBR2. Interacts with RECQL4. Interacts with TEX19; does not lead to TEX19 degradation and stabilizes it. Interacts with CASP8. Interacts with ATXN3. Interacts with UBE2O. Post-translationally, dephosphorylated by DUSP22 at Ser-1694 and Tyr-1697, leading to subsequent ubiquitination and proteasomal degradation. 'Lys-48'-linked ubiquitinated at Lys-94, Lys-779 and Lys-1599 following DUSP22-mediated dephosphorylation of Ser-1694 and Tyr-1697 which promotes UBR2 interaction with the SCF(FBW1A) E3 ubiquitin-protein ligase complex. In terms of tissue distribution, broadly expressed, with highest levels in skeletal muscle, kidney and pancreas. Present in acinar cells of the pancreas (at protein level).

The protein localises to the nucleus. Its subcellular location is the chromosome. It catalyses the reaction S-ubiquitinyl-[E2 ubiquitin-conjugating enzyme]-L-cysteine + [acceptor protein]-L-lysine = [E2 ubiquitin-conjugating enzyme]-L-cysteine + N(6)-ubiquitinyl-[acceptor protein]-L-lysine.. It functions in the pathway protein modification; protein ubiquitination. Functionally, E3 ubiquitin-protein ligase which is a component of the N-end rule pathway. Recognizes and binds to proteins bearing specific N-terminal residues (N-degrons) that are destabilizing according to the N-end rule, leading to their ubiquitination and subsequent degradation. Recognizes both type-1 and type-2 N-degrons, containing positively charged amino acids (Arg, Lys and His) and bulky and hydrophobic amino acids, respectively. Does not ubiquitinate proteins that are acetylated at the N-terminus. In contrast, it strongly binds methylated N-degrons. Plays a critical role in chromatin inactivation and chromosome-wide transcriptional silencing during meiosis via ubiquitination of histone H2A. Binds leucine and is a negative regulator of the leucine-mTOR signaling pathway, thereby controlling cell growth. Required for spermatogenesis, promotes, with Tex19.1, SPO11-dependent recombination foci to accumulate and drive robust homologous chromosome synapsis. Polyubiquitinates LINE-1 retrotransposon encoded, LIRE1, which induces degradation, inhibiting LINE-1 retrotransposon mobilization. Catalyzes ubiquitination and degradation of the N-terminal part of NLRP1 following NLRP1 activation by pathogens and other damage-associated signals: ubiquitination promotes degradation of the N-terminal part and subsequent release of the cleaved C-terminal part of NLRP1, which polymerizes and forms the NLRP1 inflammasome followed by host cell pyroptosis. Plays a role in T-cell receptor signaling by inducing 'Lys-63'-linked ubiquitination of lymphocyte cell-specific kinase LCK. This activity is regulated by DUSP22, which induces 'Lys-48'-linked ubiquitination of UBR2, leading to its proteasomal degradation by SCF E3 ubiquitin-protein ligase complex. The polypeptide is E3 ubiquitin-protein ligase UBR2 (UBR2) (Homo sapiens (Human)).